A 59-amino-acid polypeptide reads, in one-letter code: UPF0434 protein HDEF_0234 (59 aa).

Belongs to the UPF0434 family.

In Hamiltonella defensa subsp. Acyrthosiphon pisum (strain 5AT), this protein is UPF0434 protein HDEF_0234.